The chain runs to 511 residues: ATP synthase subunit alpha 1 (511 aa).

Residue 170 to 177 (GDRQTGKT) coordinates ATP.

This sequence belongs to the ATPase alpha/beta chains family. F-type ATPases have 2 components, CF(1) - the catalytic core - and CF(0) - the membrane proton channel. CF(1) has five subunits: alpha(3), beta(3), gamma(1), delta(1), epsilon(1). CF(0) has three main subunits: a(1), b(2) and c(9-12). The alpha and beta chains form an alternating ring which encloses part of the gamma chain. CF(1) is attached to CF(0) by a central stalk formed by the gamma and epsilon chains, while a peripheral stalk is formed by the delta and b chains.

Its subcellular location is the cell inner membrane. It carries out the reaction ATP + H2O + 4 H(+)(in) = ADP + phosphate + 5 H(+)(out). Its function is as follows. Produces ATP from ADP in the presence of a proton gradient across the membrane. The alpha chain is a regulatory subunit. This chain is ATP synthase subunit alpha 1, found in Gluconobacter oxydans (strain 621H) (Gluconobacter suboxydans).